The following is a 349-amino-acid chain: Phosphoribosylformylglycinamidine cyclo-ligase (349 aa).

Belongs to the AIR synthase family.

Its subcellular location is the cytoplasm. It catalyses the reaction 2-formamido-N(1)-(5-O-phospho-beta-D-ribosyl)acetamidine + ATP = 5-amino-1-(5-phospho-beta-D-ribosyl)imidazole + ADP + phosphate + H(+). It participates in purine metabolism; IMP biosynthesis via de novo pathway; 5-amino-1-(5-phospho-D-ribosyl)imidazole from N(2)-formyl-N(1)-(5-phospho-D-ribosyl)glycinamide: step 2/2. This chain is Phosphoribosylformylglycinamidine cyclo-ligase, found in Listeria monocytogenes serovar 1/2a (strain ATCC BAA-679 / EGD-e).